A 208-amino-acid polypeptide reads, in one-letter code: Ribosomal RNA large subunit methyltransferase E (208 aa).

The S-adenosyl-L-methionine site is built by Gly63, Trp65, Asp83, Asp99, and Asp124. The active-site Proton acceptor is the Lys164.

This sequence belongs to the class I-like SAM-binding methyltransferase superfamily. RNA methyltransferase RlmE family.

It localises to the cytoplasm. The enzyme catalyses uridine(2552) in 23S rRNA + S-adenosyl-L-methionine = 2'-O-methyluridine(2552) in 23S rRNA + S-adenosyl-L-homocysteine + H(+). Its function is as follows. Specifically methylates the uridine in position 2552 of 23S rRNA at the 2'-O position of the ribose in the fully assembled 50S ribosomal subunit. This Salmonella typhi protein is Ribosomal RNA large subunit methyltransferase E.